The chain runs to 208 residues: Ribosomal RNA large subunit methyltransferase E (208 aa).

Gly-63, Trp-65, Asp-83, Asp-99, and Asp-124 together coordinate S-adenosyl-L-methionine. Residue Lys-164 is the Proton acceptor of the active site.

It belongs to the class I-like SAM-binding methyltransferase superfamily. RNA methyltransferase RlmE family.

The protein resides in the cytoplasm. It carries out the reaction uridine(2552) in 23S rRNA + S-adenosyl-L-methionine = 2'-O-methyluridine(2552) in 23S rRNA + S-adenosyl-L-homocysteine + H(+). Specifically methylates the uridine in position 2552 of 23S rRNA at the 2'-O position of the ribose in the fully assembled 50S ribosomal subunit. The sequence is that of Ribosomal RNA large subunit methyltransferase E from Salmonella agona (strain SL483).